The primary structure comprises 230 residues: Probable GTP-binding protein EngB (230 aa).

An EngB-type G domain is found at E36–I224. Residues G44–S51, G69–K73, D86–G89, N166–D169, and V201–A203 contribute to the GTP site. Mg(2+) contacts are provided by S51 and T71.

It belongs to the TRAFAC class TrmE-Era-EngA-EngB-Septin-like GTPase superfamily. EngB GTPase family. It depends on Mg(2+) as a cofactor.

Necessary for normal cell division and for the maintenance of normal septation. The chain is Probable GTP-binding protein EngB from Methanococcus maripaludis (strain DSM 14266 / JCM 13030 / NBRC 101832 / S2 / LL).